Reading from the N-terminus, the 307-residue chain is Protein ORANGE, chloroplastic (307 aa).

A chloroplast-targeting transit peptide spans 1-55 (MSSLGRILSVSYPPDPYTWRFSQYKLSSSLGRNRRLRWRFTALDPESSSLDSESS). Residue K58 forms a Glycyl lysine isopeptide (Lys-Gly) (interchain with G-Cter in ubiquitin) linkage. 2 helical membrane passes run 146-166 (VYYATCFSLIAGIILFGGLLA) and 199-219 (IVASFSGGAVGVISALMVVEV). The tract at residues 208–299 (VGVISALMVV…CTGMAMASEH (92 aa)) is CR-type-like. Residues 230 to 237 (CKYCLGTG) form a CXXCXGXG motif repeat. The stretch at 241-248 (CARCSSTG) is one CXXCXXXG motif repeat. One copy of the CXXCXGXG motif repeat lies at 274–281 (CSNCSGAG). The stretch at 285 to 292 (CPTCLCTG) is one CXXCXXXG motif repeat.

This sequence belongs to the orange-like family. In terms of assembly, interacts with the phytoene synthase PSY1 in chloroplast. Binds to the eukaryotic release factor eRF1-2. Interacts with the transcription factor TCP14 in the nucleus to repress chloroplast biogenesis in etiolated seedlings. Associates to the E2 ubiquitin-conjugating enzyme UBC19. Post-translationally, ubiquitination at K-58 by UBC19 is essential for nuclear localization.

The protein localises to the plastid. Its subcellular location is the chloroplast membrane. It localises to the nucleus. It is found in the cytoplasm. Its function is as follows. Involved in chromoplast differentiation. Associated with a cellular process that triggers the differentiation of pro-plastids or other non-colored plastids into chromoplasts for carotenoid accumulation. Is associated with carotenoid accumulation in chromoplasts. Functions as a major regulator of the phytoene synthase PSY1 protein level and activity. Modulates carotenoid biosynthesis by means of post-transcriptional regulation of PSY1. Modulates carotenoid biosynthesis in part by up-regulating a series of endogenous carotenogenic genes. Regulates cell elongation in the petiole in an eRF1-2-dependent manner. Binds to and represses TCP14 transactivation activity, thus preventing early light-induced proteins (ELIPs, e.g. ELIP1 and ELIP2) expression and delaying chloroplast biogenesis (e.g. lower chlorophyll biosynthesis and slower development of thylakoid membranes) in germinating cotyledons and etiolated seedlings; reduced levels upon illumination combined to TCP14 accumulation derepress chloroplast biogenesis during deetiolation. The sequence is that of Protein ORANGE, chloroplastic from Arabidopsis thaliana (Mouse-ear cress).